The sequence spans 389 residues: S-adenosylmethionine synthase (389 aa).

Residue His-16 coordinates ATP. Asp-18 lines the Mg(2+) pocket. Glu-44 provides a ligand contact to K(+). Residues Glu-57 and Gln-101 each coordinate L-methionine. The flexible loop stretch occupies residues Gln-101–Glu-111. ATP-binding positions include Asp-168–Lys-170, Arg-234–Phe-235, Asp-243, Arg-249–Lys-250, Ala-266, and Lys-270. Position 243 (Asp-243) interacts with L-methionine. Lys-274 provides a ligand contact to L-methionine.

This sequence belongs to the AdoMet synthase family. Homotetramer; dimer of dimers. The cofactor is Mg(2+). Requires K(+) as cofactor.

It localises to the cytoplasm. It carries out the reaction L-methionine + ATP + H2O = S-adenosyl-L-methionine + phosphate + diphosphate. It participates in amino-acid biosynthesis; S-adenosyl-L-methionine biosynthesis; S-adenosyl-L-methionine from L-methionine: step 1/1. Its function is as follows. Catalyzes the formation of S-adenosylmethionine (AdoMet) from methionine and ATP. The overall synthetic reaction is composed of two sequential steps, AdoMet formation and the subsequent tripolyphosphate hydrolysis which occurs prior to release of AdoMet from the enzyme. This chain is S-adenosylmethionine synthase, found in Magnetococcus marinus (strain ATCC BAA-1437 / JCM 17883 / MC-1).